Here is a 215-residue protein sequence, read N- to C-terminus: Large ribosomal subunit protein uL3 (215 aa).

A compositionally biased stretch (low complexity) spans 131–144 (SSSRASHGNSRSHN). Positions 131 to 150 (SSSRASHGNSRSHNVPGSIG) are disordered. Position 153 is an N5-methylglutamine (Q153).

It belongs to the universal ribosomal protein uL3 family. As to quaternary structure, part of the 50S ribosomal subunit. Forms a cluster with proteins L14 and L19. Post-translationally, methylated by PrmB.

Functionally, one of the primary rRNA binding proteins, it binds directly near the 3'-end of the 23S rRNA, where it nucleates assembly of the 50S subunit. The sequence is that of Large ribosomal subunit protein uL3 from Nitrosomonas europaea (strain ATCC 19718 / CIP 103999 / KCTC 2705 / NBRC 14298).